Here is a 258-residue protein sequence, read N- to C-terminus: Enterotoxin type G (258 aa).

Residues 1-25 form the signal peptide; it reads MKKLSTVIIILILEIVFHNMNYVNA. A disulfide bridge connects residues Cys116 and Cys133.

Belongs to the staphylococcal/streptococcal toxin family.

It localises to the secreted. Its function is as follows. Staphylococcal enterotoxins cause the intoxication staphylococcal food poisoning syndrome. The illness is characterized by high fever, hypotension, diarrhea, shock, and in some cases death. The sequence is that of Enterotoxin type G (entG) from Staphylococcus aureus (strain N315).